Here is a 519-residue protein sequence, read N- to C-terminus: Galactan beta-1,4-galactosyltransferase GALS2 (519 aa).

A helical transmembrane segment spans residues 28–48; it reads LALMALLVLCTLATLLPFLPS. One can recognise a GT92 domain in the interval 257-471; that stretch reads DYLYCGSSLY…YHGSISQRRE (215 aa).

Belongs to the glycosyltransferase 92 family. As to expression, expressed in the midrib of mature leaves, root vasculature, flower filaments, siliques and seeds.

The protein localises to the golgi apparatus membrane. Involved in the biosynthesis of beta-1,4-galactan. Beta-1,4-galactans are abundant polysaccharides in plant cell walls and are found as side-chain of rhamnogalacturonan I, which is a major component of pectin. The chain is Galactan beta-1,4-galactosyltransferase GALS2 from Arabidopsis thaliana (Mouse-ear cress).